Reading from the N-terminus, the 567-residue chain is Potassium-transporting ATPase potassium-binding subunit (567 aa).

Helical transmembrane passes span 5 to 25 (GWIQILVFCGIIGLLTKPLGF), 64 to 84 (TAYAVALLLFNLAGFLVLYAL), 136 to 156 (GLTVQNFVSAATGIAIAIALI), 179 to 199 (LYVLLPLCIVLTLVYVWLGIP), 254 to 274 (ISNLIQMVTIFALGAALTNVF), 285 to 305 (WAILASMGALFIAGVAVCYWA), 330 to 350 (FGIALSALFAVITTAASCGAV), 357 to 376 (FTALGGMIPLINMQLGEVIV), 421 to 441 (MLAILCLPLAMLIFTAIAVVL), 486 to 506 (ITIGIGMLMGRFLVIIPALAI), and 529 to 549 (LFVGLLIGVIVIVGGLTFFPA).

Belongs to the KdpA family. In terms of assembly, the system is composed of three essential subunits: KdpA, KdpB and KdpC.

It localises to the cell inner membrane. Part of the high-affinity ATP-driven potassium transport (or Kdp) system, which catalyzes the hydrolysis of ATP coupled with the electrogenic transport of potassium into the cytoplasm. This subunit binds the periplasmic potassium ions and delivers the ions to the membrane domain of KdpB through an intramembrane tunnel. The protein is Potassium-transporting ATPase potassium-binding subunit of Mesorhizobium japonicum (strain LMG 29417 / CECT 9101 / MAFF 303099) (Mesorhizobium loti (strain MAFF 303099)).